Consider the following 111-residue polypeptide: Nucleoid-associated protein NGK_1136 (111 aa).

The protein belongs to the YbaB/EbfC family. As to quaternary structure, homodimer.

Its subcellular location is the cytoplasm. The protein localises to the nucleoid. Binds to DNA and alters its conformation. May be involved in regulation of gene expression, nucleoid organization and DNA protection. This Neisseria gonorrhoeae (strain NCCP11945) protein is Nucleoid-associated protein NGK_1136.